Reading from the N-terminus, the 231-residue chain is Large ribosomal subunit protein uL1 (231 aa).

The protein belongs to the universal ribosomal protein uL1 family. In terms of assembly, part of the 50S ribosomal subunit.

Its function is as follows. Binds directly to 23S rRNA. The L1 stalk is quite mobile in the ribosome, and is involved in E site tRNA release. Protein L1 is also a translational repressor protein, it controls the translation of the L11 operon by binding to its mRNA. In Acinetobacter baumannii (strain AB0057), this protein is Large ribosomal subunit protein uL1.